A 583-amino-acid polypeptide reads, in one-letter code: Propane 2-monooxygenase operon transcriptional activator MimR (583 aa).

The region spanning 320–513 (LAGRSSSFRR…LRHVLTETLR (194 aa)) is the Sigma-54 factor interaction domain. Residues 348–355 (GEKGSGRT) and 395–404 (DADFAVIVAD) each bind ATP.

In terms of biological role, acts as a transcriptional activator of the mimABCD operon encoding the propane 2-monooxygenase complex. In Mycolicibacterium goodii (Mycobacterium goodii), this protein is Propane 2-monooxygenase operon transcriptional activator MimR.